Here is a 43-residue protein sequence, read N- to C-terminus: Neurotrophin-3 (43 aa).

It belongs to the NGF-beta family.

The protein resides in the secreted. Seems to promote the survival of visceral and proprioceptive sensory neurons. This chain is Neurotrophin-3 (ntf3), found in Raja clavata (Thornback ray).